The following is a 332-amino-acid chain: Ribosomal RNA small subunit methyltransferase C (332 aa).

The protein belongs to the methyltransferase superfamily. RsmC family. As to quaternary structure, monomer.

The protein resides in the cytoplasm. It carries out the reaction guanosine(1207) in 16S rRNA + S-adenosyl-L-methionine = N(2)-methylguanosine(1207) in 16S rRNA + S-adenosyl-L-homocysteine + H(+). Functionally, specifically methylates the guanine in position 1207 of 16S rRNA in the 30S particle. The sequence is that of Ribosomal RNA small subunit methyltransferase C from Pseudomonas syringae pv. syringae (strain B728a).